A 684-amino-acid polypeptide reads, in one-letter code: Divalent metal transporter 1 (684 aa).

The Cytoplasmic portion of the chain corresponds to M1–K228. The tract at residues N153–K195 is disordered. Low complexity predominate over residues N156–V191. The chain crosses the membrane as a helical span at residues L229–L247. The Vacuolar segment spans residues D248 to Y275. The chain crosses the membrane as a helical span at residues Y276–G299. Topologically, residues H300 to S319 are cytoplasmic. A helical transmembrane segment spans residues T320–L345. The Vacuolar segment spans residues N346–G350. The helical transmembrane segment at I351 to L370 threads the bilayer. The Cytoplasmic segment spans residues E371 to V381. Residues L382–F404 form a helical membrane-spanning segment. Residues K405–D423 lie on the Vacuolar side of the membrane. The helical transmembrane segment at A424 to A445 threads the bilayer. The Cytoplasmic segment spans residues K446–T465. The helical transmembrane segment at I466 to A487 threads the bilayer. The Vacuolar portion of the chain corresponds to E488 to K515. The chain crosses the membrane as a helical span at residues I516–F534. The Cytoplasmic portion of the chain corresponds to M535 to T554. The helical transmembrane segment at F555–L573 threads the bilayer. The Vacuolar portion of the chain corresponds to T574–T584. The helical transmembrane segment at N585–Y603 threads the bilayer. The Cytoplasmic segment spans residues R604–K622. A helical membrane pass occupies residues F623–V645. Residues H646–S650 lie on the Vacuolar side of the membrane. A helical membrane pass occupies residues L651 to N673. The Cytoplasmic segment spans residues I674–N684.

The protein belongs to the NRAMP (TC 2.A.55) family.

It localises to the vacuole membrane. The catalysed reaction is Fe(2+)(in) = Fe(2+)(out). Iron transporter. Required for parasite development during the blood stages. Required for apicoplast biogenesis. Required for mitochondrial polarization. This is Divalent metal transporter 1 from Plasmodium falciparum (isolate 3D7).